Here is a 206-residue protein sequence, read N- to C-terminus: Ribosomal RNA large subunit methyltransferase E (206 aa).

Residues glycine 60, tryptophan 62, aspartate 80, aspartate 96, and aspartate 121 each coordinate S-adenosyl-L-methionine. Lysine 161 acts as the Proton acceptor in catalysis.

The protein belongs to the class I-like SAM-binding methyltransferase superfamily. RNA methyltransferase RlmE family.

The protein resides in the cytoplasm. It catalyses the reaction uridine(2552) in 23S rRNA + S-adenosyl-L-methionine = 2'-O-methyluridine(2552) in 23S rRNA + S-adenosyl-L-homocysteine + H(+). Functionally, specifically methylates the uridine in position 2552 of 23S rRNA at the 2'-O position of the ribose in the fully assembled 50S ribosomal subunit. This chain is Ribosomal RNA large subunit methyltransferase E, found in Nitrosospira multiformis (strain ATCC 25196 / NCIMB 11849 / C 71).